The sequence spans 181 residues: Malignant T-cell-amplified sequence 2 (181 aa).

The 80-residue stretch at 92–171 (LPHQQVDKGA…IGIENIHYLN (80 aa)) folds into the PUA domain.

It belongs to the MCTS1 family.

It is found in the cytoplasm. This Homo sapiens (Human) protein is Malignant T-cell-amplified sequence 2.